A 207-amino-acid polypeptide reads, in one-letter code: Ribosomal RNA small subunit methyltransferase G (207 aa).

S-adenosyl-L-methionine-binding positions include G71, F76, 122 to 123 (AE), and R135.

It belongs to the methyltransferase superfamily. RNA methyltransferase RsmG family.

The protein resides in the cytoplasm. Functionally, specifically methylates the N7 position of a guanine in 16S rRNA. The sequence is that of Ribosomal RNA small subunit methyltransferase G from Cytophaga hutchinsonii (strain ATCC 33406 / DSM 1761 / CIP 103989 / NBRC 15051 / NCIMB 9469 / D465).